Reading from the N-terminus, the 395-residue chain is Elongation factor Tu (395 aa).

A tr-type G domain is found at 10–205 (KPHVNIGTIG…AVDSYIPMPE (196 aa)). Positions 19-26 (GHIDHGKT) are G1. 19–26 (GHIDHGKT) contributes to the GTP binding site. Thr26 provides a ligand contact to Mg(2+). Residues 61 to 65 (GITIA) form a G2 region. Residues 82-85 (DCPG) are G3. Residues 82–86 (DCPGH) and 137–140 (NKVD) contribute to the GTP site. The segment at 137 to 140 (NKVD) is G4. Residues 175-177 (SAL) form a G5 region.

The protein belongs to the TRAFAC class translation factor GTPase superfamily. Classic translation factor GTPase family. EF-Tu/EF-1A subfamily. As to quaternary structure, monomer.

Its subcellular location is the cytoplasm. It catalyses the reaction GTP + H2O = GDP + phosphate + H(+). Its function is as follows. GTP hydrolase that promotes the GTP-dependent binding of aminoacyl-tRNA to the A-site of ribosomes during protein biosynthesis. The sequence is that of Elongation factor Tu from Solibacter usitatus (strain Ellin6076).